Consider the following 258-residue polypeptide: Indole-3-glycerol phosphate synthase (258 aa).

Belongs to the TrpC family.

The catalysed reaction is 1-(2-carboxyphenylamino)-1-deoxy-D-ribulose 5-phosphate + H(+) = (1S,2R)-1-C-(indol-3-yl)glycerol 3-phosphate + CO2 + H2O. Its pathway is amino-acid biosynthesis; L-tryptophan biosynthesis; L-tryptophan from chorismate: step 4/5. The protein is Indole-3-glycerol phosphate synthase of Campylobacter jejuni (strain RM1221).